A 142-amino-acid chain; its full sequence is Hemoglobin subunit alpha-2 (142 aa).

A Globin domain is found at 2–142; that stretch reads VLSAADKTNV…VSTVLTSKYR (141 aa). H59 serves as a coordination point for O2. H88 contacts heme b.

The protein belongs to the globin family. As to quaternary structure, heterotetramer of two alpha chains and two beta chains. In terms of tissue distribution, red blood cells.

In terms of biological role, involved in oxygen transport from the lung to the various peripheral tissues. Hemopressin acts as an antagonist peptide of the cannabinoid receptor CNR1. Hemopressin-binding efficiently blocks cannabinoid receptor CNR1 and subsequent signaling. This Equus quagga burchellii (Burchell's zebra) protein is Hemoglobin subunit alpha-2 (HBA2).